The following is a 777-amino-acid chain: Phosphoribosylformylglycinamidine synthase subunit PurL (777 aa).

The active site involves His50. ATP is bound by residues Tyr53 and Lys92. Glu94 is a binding site for Mg(2+). Substrate-binding positions include 95 to 98 (SHNH) and Arg117. The active-site Proton acceptor is His96. Residue Asp118 coordinates Mg(2+). Substrate is bound at residue Gln241. Residue Asp269 participates in Mg(2+) binding. 313-315 (ESQ) serves as a coordination point for substrate. Asp516 and Gly553 together coordinate ATP. Asn554 contacts Mg(2+). Ser556 is a substrate binding site.

Belongs to the FGAMS family. In terms of assembly, monomer. Part of the FGAM synthase complex composed of 1 PurL, 1 PurQ and 2 PurS subunits.

The protein resides in the cytoplasm. It catalyses the reaction N(2)-formyl-N(1)-(5-phospho-beta-D-ribosyl)glycinamide + L-glutamine + ATP + H2O = 2-formamido-N(1)-(5-O-phospho-beta-D-ribosyl)acetamidine + L-glutamate + ADP + phosphate + H(+). Its pathway is purine metabolism; IMP biosynthesis via de novo pathway; 5-amino-1-(5-phospho-D-ribosyl)imidazole from N(2)-formyl-N(1)-(5-phospho-D-ribosyl)glycinamide: step 1/2. Its function is as follows. Part of the phosphoribosylformylglycinamidine synthase complex involved in the purines biosynthetic pathway. Catalyzes the ATP-dependent conversion of formylglycinamide ribonucleotide (FGAR) and glutamine to yield formylglycinamidine ribonucleotide (FGAM) and glutamate. The FGAM synthase complex is composed of three subunits. PurQ produces an ammonia molecule by converting glutamine to glutamate. PurL transfers the ammonia molecule to FGAR to form FGAM in an ATP-dependent manner. PurS interacts with PurQ and PurL and is thought to assist in the transfer of the ammonia molecule from PurQ to PurL. This is Phosphoribosylformylglycinamidine synthase subunit PurL from Synechococcus elongatus (strain ATCC 33912 / PCC 7942 / FACHB-805) (Anacystis nidulans R2).